The sequence spans 274 residues: Large ribosomal subunit protein uL2 (274 aa).

The tract at residues Arg221–Lys274 is disordered.

This sequence belongs to the universal ribosomal protein uL2 family. Part of the 50S ribosomal subunit. Forms a bridge to the 30S subunit in the 70S ribosome.

Functionally, one of the primary rRNA binding proteins. Required for association of the 30S and 50S subunits to form the 70S ribosome, for tRNA binding and peptide bond formation. It has been suggested to have peptidyltransferase activity; this is somewhat controversial. Makes several contacts with the 16S rRNA in the 70S ribosome. The protein is Large ribosomal subunit protein uL2 of Yersinia pseudotuberculosis serotype O:1b (strain IP 31758).